Reading from the N-terminus, the 47-residue chain is PhoP/PhoQ regulator MgrB (47 aa).

Residues 6 to 26 form a helical membrane-spanning segment; it reads WVLLIVIIAGCLLLWTQMLNV.

It belongs to the MgrB family. May form homooligomers. Probably interacts with the periplasmic domain of PhoQ.

The protein resides in the cell inner membrane. PhoP-regulated transcription is redox-sensitive, being activated when the periplasm becomes more reducing. MgrB acts between DsbA/DsbB and PhoP/PhoQ in this pathway. Represses PhoP/PhoQ signaling, possibly by binding to the periplasmic domain of PhoQ, altering its activity and that of downstream effector PhoP. This Klebsiella pneumoniae (strain 342) protein is PhoP/PhoQ regulator MgrB.